Consider the following 152-residue polypeptide: Ribosome maturation factor RimP (152 aa).

It belongs to the RimP family.

Its subcellular location is the cytoplasm. In terms of biological role, required for maturation of 30S ribosomal subunits. The polypeptide is Ribosome maturation factor RimP (Francisella tularensis subsp. tularensis (strain FSC 198)).